The sequence spans 430 residues: C-terminal-binding protein 1 (430 aa).

The segment at 1–59 (MSGVRPPIMNGPMHPRPLVALLDGRDCTVEMPILKDVATVAFCDAQSTQEIHEKVLNEA) is interaction with GLIS2 1. Residues Ser89, 169-174 (IGLGRV), Asp193, 226-232 (CGLNEHN), 253-255 (TAR), and Asp279 each bind NAD(+). Residue Arg255 is part of the active site. The interval 277-349 (ALDVHESEPF…VNKDHLTAAT (73 aa)) is interaction with GLIS2 2. Glu284 is an active-site residue. Ser289 carries the post-translational modification Phosphoserine. Catalysis depends on His304, which acts as the Proton donor. Positions 398 to 430 (SHGLPPVAHPPHAPSPGQTVKPEADRDHTTDQL) are disordered. Residue Ser412 is modified to Phosphoserine. Lys418 participates in a covalent cross-link: Glycyl lysine isopeptide (Lys-Gly) (interchain with G-Cter in SUMO). A compositionally biased stretch (basic and acidic residues) spans 419–430 (PEADRDHTTDQL).

This sequence belongs to the D-isomer specific 2-hydroxyacid dehydrogenase family. As to quaternary structure, homo- or heterodimer. Heterodimer with CTBP2. Interacts with ELK3 (via its PXDLS motif). Interacts with RBBP8 (via its PXDLS motif); the interaction is disrupted by binding to adenovirus E1A. Interacts with PNN, MECOM and ZFHX1B. Interacts with ZNF366 (via PXDLS motif). Interaction with SATB1 (non-acetylated form); the interaction stabilizes its attachment to DNA and promotes transcription repression. Interacts with PRDM16; the interaction represses white adipose tissue (WAT)-specific genes expression. Interacts with GLIS2, HIPK2, FOXP1, FOXP2, HDAC4, HDAC5, HDAC9, NRIP1 and WIZ. Interacts with ZNF217. Interacts with BCL6; the interaction is required for BCL6 transcriptional autoinhibition and inhibition of some BCL6 target genes. Interacts with IKZF4. Interacts with MCRIP1 (unphosphorylated form, via the PXDLS motif); competitively inhibiting CTBP-ZEB1 interaction. Interacts with Bassoon/BSN; this interaction targets and anchors CTBP1 to presynapses. Interacts with SIMC1. The cofactor is NAD(+). In terms of processing, the level of phosphorylation appears to be regulated during the cell cycle. Phosphorylation by HIPK2 on Ser-412 induces proteasomal degradation. Post-translationally, ADP-ribosylated; when cells are exposed to brefeldin A. Sumoylation on Lys-418 is promoted by the E3 SUMO-protein ligase CBX4.

The protein resides in the cytoplasm. It localises to the nucleus. The protein localises to the synapse. Its subcellular location is the synaptosome. Corepressor targeting diverse transcription regulators such as GLIS2 or BCL6. Has dehydrogenase activity. Involved in controlling the equilibrium between tubular and stacked structures in the Golgi complex. Functions in brown adipose tissue (BAT) differentiation. The chain is C-terminal-binding protein 1 (Ctbp1) from Rattus norvegicus (Rat).